The chain runs to 202 residues: FMN-dependent NADH:quinone oxidoreductase 2 (202 aa).

Residues S9, 15–17 (SAS), 95–98 (MYNF), and 139–142 (TAGG) each bind FMN.

Belongs to the azoreductase type 1 family. Homodimer. It depends on FMN as a cofactor.

It catalyses the reaction 2 a quinone + NADH + H(+) = 2 a 1,4-benzosemiquinone + NAD(+). The enzyme catalyses N,N-dimethyl-1,4-phenylenediamine + anthranilate + 2 NAD(+) = 2-(4-dimethylaminophenyl)diazenylbenzoate + 2 NADH + 2 H(+). Its function is as follows. Quinone reductase that provides resistance to thiol-specific stress caused by electrophilic quinones. Reduces both benzoquinones and naphthoquinones efficiently. In terms of biological role, also exhibits azoreductase activity. Catalyzes the reductive cleavage of the azo bond in aromatic azo compounds to the corresponding amines. Preferred substrates are the large bis-azo dye Ponceau BS, amaranth and tropaeolin O. This is FMN-dependent NADH:quinone oxidoreductase 2 from Pseudomonas aeruginosa (strain ATCC 15692 / DSM 22644 / CIP 104116 / JCM 14847 / LMG 12228 / 1C / PRS 101 / PAO1).